The primary structure comprises 397 residues: S-adenosylmethionine synthase (397 aa).

Residue His16 participates in ATP binding. Asp18 serves as a coordination point for Mg(2+). Glu44 provides a ligand contact to K(+). 2 residues coordinate L-methionine: Glu57 and Gln100. A flexible loop region spans residues Gln100–Glu110. ATP-binding positions include Asp175 to Lys177, Arg242 to Phe243, Asp251, Arg257 to Lys258, Ala274, and Lys278. Asp251 is a binding site for L-methionine. Position 282 (Lys282) interacts with L-methionine.

Belongs to the AdoMet synthase family. In terms of assembly, homotetramer; dimer of dimers. It depends on Mg(2+) as a cofactor. The cofactor is K(+).

Its subcellular location is the cytoplasm. It carries out the reaction L-methionine + ATP + H2O = S-adenosyl-L-methionine + phosphate + diphosphate. It functions in the pathway amino-acid biosynthesis; S-adenosyl-L-methionine biosynthesis; S-adenosyl-L-methionine from L-methionine: step 1/1. In terms of biological role, catalyzes the formation of S-adenosylmethionine (AdoMet) from methionine and ATP. The overall synthetic reaction is composed of two sequential steps, AdoMet formation and the subsequent tripolyphosphate hydrolysis which occurs prior to release of AdoMet from the enzyme. This Streptococcus thermophilus (strain ATCC BAA-250 / LMG 18311) protein is S-adenosylmethionine synthase.